We begin with the raw amino-acid sequence, 105 residues long: Nitrogenase-stabilizing/protective protein NifW (105 aa).

Belongs to the NifW family. Homotrimer; associates with NifD.

May protect the nitrogenase Fe-Mo protein from oxidative damage. This Nostoc punctiforme (strain ATCC 29133 / PCC 73102) protein is Nitrogenase-stabilizing/protective protein NifW.